The chain runs to 283 residues: Thymidylate synthase (283 aa).

Arg22 contributes to the dUMP binding site. Cys160 acts as the Nucleophile in catalysis. DUMP is bound by residues 180 to 183 (RSCD), Asn191, and 221 to 223 (HIY). Residue Asp183 participates in (6R)-5,10-methylene-5,6,7,8-tetrahydrofolate binding. Residue Ser282 participates in (6R)-5,10-methylene-5,6,7,8-tetrahydrofolate binding.

It belongs to the thymidylate synthase family. Bacterial-type ThyA subfamily. In terms of assembly, homodimer.

The protein resides in the cytoplasm. It catalyses the reaction dUMP + (6R)-5,10-methylene-5,6,7,8-tetrahydrofolate = 7,8-dihydrofolate + dTMP. It functions in the pathway pyrimidine metabolism; dTTP biosynthesis. Catalyzes the reductive methylation of 2'-deoxyuridine-5'-monophosphate (dUMP) to 2'-deoxythymidine-5'-monophosphate (dTMP) while utilizing 5,10-methylenetetrahydrofolate (mTHF) as the methyl donor and reductant in the reaction, yielding dihydrofolate (DHF) as a by-product. This enzymatic reaction provides an intracellular de novo source of dTMP, an essential precursor for DNA biosynthesis. This chain is Thymidylate synthase, found in Histophilus somni (strain 129Pt) (Haemophilus somnus).